A 452-amino-acid polypeptide reads, in one-letter code: MKDTIVAQATPIGRGGVGILRISGPLAQEVAKEVLGKELKPRLANYLPFKDQDGTVLDQGIALFFKAPNSFTGEDVLELQGHGGQVILDILLKRILTIKGIRIARAGEFSEQAFLNDKLDLAQAEAIADLIDATSEQAARSALKSLQGEFSNKINQLVDSVIYLRTYVEAAIDFPDEEIDFLADGKIEGHLNDIIRQLNGVRKEAKQGAILREGMKVVIAGRPNAGKSSLLNALAGREAAIVTNIAGTTRDVLREHIHIDGMPLHIIDTAGLREASDEVEKIGIQRAWDEIEQADHVLLMIDSTEQTAEAFKTEWADFLAKLPQNIPVTVIRNKVDLSGEAEGLQELDGFTLIRLSAQTKVGVDLLREHLKKSMGYQSSTEGGFLARRRHLQALETAAEHLERGHIQLTQFFAGELLAEELRMVQNALSEITGQFTSDDLLGNIFSSFCIGK.

Residues R21, E78, and K118 each contribute to the (6S)-5-formyl-5,6,7,8-tetrahydrofolate site. The region spanning 214 to 375 (GMKVVIAGRP…LREHLKKSMG (162 aa)) is the TrmE-type G domain. Position 224 (N224) interacts with K(+). GTP is bound by residues 224–229 (NAGKSS), 243–249 (TNIAGTT), and 268–271 (DTAG). S228 is a Mg(2+) binding site. T243, I245, and T248 together coordinate K(+). T249 provides a ligand contact to Mg(2+). K452 is a (6S)-5-formyl-5,6,7,8-tetrahydrofolate binding site.

Belongs to the TRAFAC class TrmE-Era-EngA-EngB-Septin-like GTPase superfamily. TrmE GTPase family. As to quaternary structure, homodimer. Heterotetramer of two MnmE and two MnmG subunits. It depends on K(+) as a cofactor.

Its subcellular location is the cytoplasm. Exhibits a very high intrinsic GTPase hydrolysis rate. Involved in the addition of a carboxymethylaminomethyl (cmnm) group at the wobble position (U34) of certain tRNAs, forming tRNA-cmnm(5)s(2)U34. The sequence is that of tRNA modification GTPase MnmE from Actinobacillus pleuropneumoniae serotype 3 (strain JL03).